We begin with the raw amino-acid sequence, 239 residues long: Flagellar L-ring protein (239 aa).

The N-terminal stretch at M1–A16 is a signal peptide. C17 carries the N-palmitoyl cysteine lipid modification. The S-diacylglycerol cysteine moiety is linked to residue C17. Residues S120–S138 are compositionally biased toward polar residues. Positions S120–I145 are disordered.

The protein belongs to the FlgH family. As to quaternary structure, the basal body constitutes a major portion of the flagellar organelle and consists of four rings (L,P,S, and M) mounted on a central rod.

It is found in the cell outer membrane. The protein localises to the bacterial flagellum basal body. Assembles around the rod to form the L-ring and probably protects the motor/basal body from shearing forces during rotation. This is Flagellar L-ring protein from Azorhizobium caulinodans (strain ATCC 43989 / DSM 5975 / JCM 20966 / LMG 6465 / NBRC 14845 / NCIMB 13405 / ORS 571).